We begin with the raw amino-acid sequence, 613 residues long: MMDYKKLGLKVGIEIHQQLDTKHKLFCLCPTLTREVEESNFEFFRYLRLKRSEIGEEDRAAKEEVERSRRFIYKYYDTTCLVEADEEPPREVNREALLIAIQVAKMLNMEVVDEVHVMRKIVIDGSNTTGFQRTALVAFGGFLEVDGKRVGVATLCLEEEACRKVEDGEGYAVYSLDRLGIPLVEIGTEPDIDSPEMAKKVAARLGMILRSTGKVKRGLGTIRQDVNISIRDGARVEIKGVQELDILDKIVEYEVLRQVNLLKIREELKQRGARVEEKVFDVTDVFSNTKSKIIRNKTVKAILLRGFGGIVGREIQPGRRLGTEFADIAKTYGLGGVFHTDELPAYGISEEEVSRLRDAVGAEDGDAVVMAAGDAVRVERALRRIIERAKHCLVGVPEETRKANEDGTTSYLRPLPGAARMYPETDVPPVVVTEEMLNVEIPELIEERARRYEKLLPKDLAWEIADSPYYRVFEEYSEKLQPTVVARVLYLAPAALRREGVEIERLEERHYRLVLDMVLRGDIAKEGAEEALKLLCQNPEMSAGQLKEKIGAAEDIDGFIAKLIEEKADLIAERGEGAFKPLMGLVMKEFRGKVDGKVVAEKLKKALKSALSQ.

The protein belongs to the GatB/GatE family. GatE subfamily. Heterodimer of GatD and GatE.

The enzyme catalyses L-glutamyl-tRNA(Gln) + L-glutamine + ATP + H2O = L-glutaminyl-tRNA(Gln) + L-glutamate + ADP + phosphate + H(+). Its function is as follows. Allows the formation of correctly charged Gln-tRNA(Gln) through the transamidation of misacylated Glu-tRNA(Gln) in organisms which lack glutaminyl-tRNA synthetase. The reaction takes place in the presence of glutamine and ATP through an activated gamma-phospho-Glu-tRNA(Gln). The GatDE system is specific for glutamate and does not act on aspartate. This chain is Glutamyl-tRNA(Gln) amidotransferase subunit E, found in Archaeoglobus fulgidus (strain ATCC 49558 / DSM 4304 / JCM 9628 / NBRC 100126 / VC-16).